The primary structure comprises 364 residues: Bifunctional protein Rv2228c (364 aa).

Positions 1-139 constitute an RNase H type-1 domain; it reads MKVVIEADGG…MDAAAQSAAA (139 aa). The Mg(2+) site is built by Asp-8, Glu-49, Asp-73, and Asp-123. Catalysis depends on His-172, which acts as the Tele-phosphohistidine intermediate. The active-site Proton donor/acceptor; for phosphatase activity is Glu-246.

This sequence in the N-terminal section; belongs to the RNase H family. In the C-terminal section; belongs to the histidine phosphatase superfamily. In terms of assembly, the N-terminal domain alone is monomeric in solution but associates in the crystal to form a dimer. Mg(2+) is required as a cofactor.

It catalyses the reaction Endonucleolytic cleavage to 5'-phosphomonoester.. The catalysed reaction is adenosylcob(III)alamin 5'-phosphate + H2O = adenosylcob(III)alamin + phosphate. The enzyme catalyses alpha-ribazole 5'-phosphate + H2O = alpha-ribazole + phosphate. The protein operates within nucleoside biosynthesis; alpha-ribazole biosynthesis; alpha-ribazole from 5,6-dimethylbenzimidazole: step 2/2. Endonuclease that displays both RNase H activity with a hybrid RNA/DNA substrate as well as double-stranded RNase activity. As the only authenticated RNase HI in M.tuberculosis, probably plays an important role in the physiology of this organism, being likely involved in bacterial replication. In terms of biological role, catalyzes the hydrolysis of the phospho group from alpha-ribazole 5'-phosphate to form alpha-ribazole. May also catalyze the conversion of adenosylcobalamin 5'-phosphate to adenosylcobalamin (vitamin B12). Has a possible role in B12 recycling, but the primary role of the C-terminal domain of this phosphatase enzyme could be phosphate generation to help bacterial survival within the macrophage, which is a phosphate-deprived environment. The protein is Bifunctional protein Rv2228c of Mycobacterium tuberculosis (strain ATCC 25618 / H37Rv).